We begin with the raw amino-acid sequence, 90 residues long: ATP synthase subunit c (90 aa).

A run of 2 helical transmembrane segments spans residues 17 to 37 and 70 to 90; these read PLAYGLTMVAAGLAIMGAGVV and LAIVETASIYCFIIALLIIFV.

Belongs to the ATPase C chain family. F-type ATPases have 2 components, F(1) - the catalytic core - and F(0) - the membrane proton channel. F(1) has five subunits: alpha(3), beta(3), gamma(1), delta(1), epsilon(1). F(0) has three main subunits: a(1), b(2) and c(10-14). The alpha and beta chains form an alternating ring which encloses part of the gamma chain. F(1) is attached to F(0) by a central stalk formed by the gamma and epsilon chains, while a peripheral stalk is formed by the delta and b chains.

The protein localises to the cell membrane. In terms of biological role, f(1)F(0) ATP synthase produces ATP from ADP in the presence of a proton or sodium gradient. F-type ATPases consist of two structural domains, F(1) containing the extramembraneous catalytic core and F(0) containing the membrane proton channel, linked together by a central stalk and a peripheral stalk. During catalysis, ATP synthesis in the catalytic domain of F(1) is coupled via a rotary mechanism of the central stalk subunits to proton translocation. Its function is as follows. Key component of the F(0) channel; it plays a direct role in translocation across the membrane. A homomeric c-ring of between 10-14 subunits forms the central stalk rotor element with the F(1) delta and epsilon subunits. The chain is ATP synthase subunit c from Metamycoplasma arthritidis (strain 158L3-1) (Mycoplasma arthritidis).